The chain runs to 533 residues: Peptide chain release factor 3 (533 aa).

The tr-type G domain occupies 9–284 (ARRRTFAIIS…ALCELSPPPL (276 aa)). GTP contacts are provided by residues 18–25 (SHPDAGKT), 95–99 (DTPGH), and 149–152 (NKLD).

The protein belongs to the TRAFAC class translation factor GTPase superfamily. Classic translation factor GTPase family. PrfC subfamily.

It is found in the cytoplasm. Its function is as follows. Increases the formation of ribosomal termination complexes and stimulates activities of RF-1 and RF-2. It binds guanine nucleotides and has strong preference for UGA stop codons. It may interact directly with the ribosome. The stimulation of RF-1 and RF-2 is significantly reduced by GTP and GDP, but not by GMP. This Cupriavidus necator (strain ATCC 17699 / DSM 428 / KCTC 22496 / NCIMB 10442 / H16 / Stanier 337) (Ralstonia eutropha) protein is Peptide chain release factor 3.